Reading from the N-terminus, the 407-residue chain is Peptidase T (407 aa).

H81 contacts Zn(2+). D83 is an active-site residue. Position 142 (D142) interacts with Zn(2+). The active-site Proton acceptor is E176. Positions 177, 199, and 381 each coordinate Zn(2+).

The protein belongs to the peptidase M20B family. Zn(2+) serves as cofactor.

Its subcellular location is the cytoplasm. It carries out the reaction Release of the N-terminal residue from a tripeptide.. In terms of biological role, cleaves the N-terminal amino acid of tripeptides. In Streptococcus pneumoniae (strain P1031), this protein is Peptidase T.